Reading from the N-terminus, the 243-residue chain is Small ribosomal subunit protein eS4 (243 aa).

In terms of domain architecture, S4 RNA-binding spans 37–99; sequence IPLALLLKHY…SDLYFRIVPD (63 aa).

The protein belongs to the eukaryotic ribosomal protein eS4 family.

This Sulfurisphaera tokodaii (strain DSM 16993 / JCM 10545 / NBRC 100140 / 7) (Sulfolobus tokodaii) protein is Small ribosomal subunit protein eS4 (rps4e).